Consider the following 244-residue polypeptide: Venom nerve growth factor (244 aa).

An N-terminal signal peptide occupies residues Met1 to Ala18. Residues Ala19–Arg125 constitute a propeptide that is removed on maturation. Disulfide bonds link Cys139/Cys204, Cys182/Cys232, and Cys192/Cys234. The N-linked (GlcNAc...) asparagine glycan is linked to Asn148.

This sequence belongs to the NGF-beta family. In terms of assembly, homodimer; non-covalently linked. Post-translationally, N-glycosylated. As to expression, expressed by the venom gland.

Its subcellular location is the secreted. Functionally, nerve growth factor is important for the development and maintenance of the sympathetic and sensory nervous systems. It stimulates division and differentiation of sympathetic and embryonic sensory neurons as well as basal forebrain cholinergic neurons in the brain. Its relevance in the snake venom is not clear. However, it has been shown to inhibit metalloproteinase-dependent proteolysis of platelet glycoprotein Ib alpha, suggesting a metalloproteinase inhibition to prevent metalloprotease autodigestion and/or protection against prey proteases. Binds a lipid between the two protein chains in the homodimer. The lipid-bound form promotes histamine relase from mouse mast cells, contrary to the lipid-free form. It promotes neurite outgrowth in rat PC12 pheochromocytoma cells. This chain is Venom nerve growth factor, found in Macrovipera lebetinus (Levantine viper).